We begin with the raw amino-acid sequence, 140 residues long: Tail assembly protein G (140 aa).

Residues 114–140 (IDEPTSSGEERNEPAEPVTAEKPSPVS) are disordered.

Belongs to the lambda-like tail assembly protein family. In terms of assembly, interacts with the tail assembly protein GT and the tape measure protein.

It is found in the host cytoplasm. In terms of biological role, promotes tail assembly by creating a scaffold for the tail tube proteins. Tail assembly proteins G and GT probably wrap the linear tape measure protein to create a tail assembly scaffold. This allows the polymerization of the tail tube protein, during which G and GT are released, therefore they are absent in the mature virion. The tail assembly protein GT is produced by a rare -1 ribosomal frameshift. The ratio of translated G/GT is about 20, and this ratio is important for proper tail assembly. This is Tail assembly protein G from Escherichia coli (Bacteriophage N15).